The sequence spans 2339 residues: MVRFGDELGGRYGGAGGAERARGGGAGGAGGPGPGGLPPGQRVLYKQSIAQRARTMALYNPIPVKQNCFTVNRSLFVFSEDNVVRKYAKRITEWPPFEYMILATIIANCIVLALEQHLPDGDKTPMSERLDDTEPYFIGIFCFEAGIKILALGFVLHKGSYLRNGWNVMDFVVVLTGILATAGTDFDLRTLRAVRVLRPLKLVSGIPSLQVVLKSIMKAMVPLLQIGLLLFFAILMFAIIGLEFYMGKFHKACFPNSTDPDPVGDFPCGKEAPARLCEGDTECREYWAGPNFGITNFDNILFAILTVFQCITMEGWTDILYNTNDAAGNTWNWLYFIPLIIIGSFFMLNLVLGVLSGEFAKERERVENRRAFLKLRRQQQIERELNGYLEWIFKAEEVMLAEEDRNAEEKSPLDAVLKRAAAKKSRSDLIQAEEGEGRLTGLCAPGSPFARASLKSGKTESSSYFRRKEKMFRFFIRRMVKAQSFYWTVLCVVALNTLCVAMVHYNQPQRLTTALYFAEFVFLGLFLTEMSLKMYGLGPRSYFRSSFNCFDFGVIVGSIFEVVWAAVKPGTSFGISVLRALRLLRIFKVTKYWNSLRNLVVSLLNSMKSIISLLFLLFLFIVVFALLGMQLFGGQFNFKDETPTTNFDTFPAAILTVFQILTGEDWNAVMYHGIESQGGVSRGMFSSFYFIVLTLFGNYTLLNVFLAIAVDNLANAQELTKDEEEMEEAANQKLALQKAKEVAEVSPMSAANISIAARQQNSAKARSVWEQRASQLRLQNLRASCEALYSEMDPEERLRYATARHLRPDVKTHLDRPLVVEPGRDAPRGPPGGKSRPDGSEAPEGADPPRRHHRHRDKDKAPATVPSAGEQDRAEALRAEGGELGPREERGRPRRSRSKEAPGAPEVRSDRGRGPCPEGGRRHHRRGSPEEAAEREPRRHRAHRHGPDPGKEGPASGTRGERRARHRTGPRACPREAESSEEPARRHRARHKAPPTQETAEKDKEAAEKGGEATEAEKDKEARNHQPKELPCDLEAIGMLGVGAVHTLPSTCLQKVEEQPEDADNQRNVTRMGSQPPDTSTTVHIPVTLTGPPGETTVVPSGNVDLESQAEGKKEVETSDVMRSGPRPIVPYSSMFCLSPTNLLRRCCHYIVTMRYFEMVILVVIALSSIALAAEDPVRTDSPRNNALKYMDYIFTGVFTFEMVIKMIDLGLLLHPGAYFRDLWNILDFIVVSGALVAFAFSGSKGKDISTIKSLRVLRVLRPLKTIKRLPKLKAVFDCVVNSLKNVLNILIVYMLFMFIFAVIAVQLFKGKFFYCTDESKELERDCRGQYLDYEKEEVEAQPRQWKKYDFHYDNVLWALLTLFTVSTGEGWPMVLKHSVDATYEEQGPSPGYRMELSIFYVVYFVVFPFFFVNIFVALIIITFQEQGDKVMSECSLEKNERACIDFAISARPLTRYMPQNKQSFQYKTWTFVVSPPFEYFIMAMIALNTVVLMMKFYDAPYEYELMLKCLNIVFTSMFSMECVLKIIAFGVLNYFRDAWNVFDFVTVLGSITDILVTEIANNFINLSFLRLFRAARLIKLLRQGYTIRILLWTFVQSFKALPYVCLLIAMLFFIYAIIGMQVFGNIALDDDTSINRHNNFRTFLQALMLLFRSATGEAWHEIMLSCLSSRACDEHSNASECGSDFAYFYFVSFIFLCSFLMLNLFVAVIMDNFEYLTRDSSILGPHHLDEFIRVWAEYDPAACGRISYSDMFEMLKHMSPPLGLGKKCPARVAYKRLVRMNMPISSEDMTVHFTSTLMALIRTALDIKLAPAGTKQHQCDAELRKEISCVWANLPQKTLDLLVPPHKPDEMTVGKVYAALMIFDFYKQNKTSRDQTQQAPGGLSQLGPVSLFHPLKATLEQTQPALRGARAFLRQKSSASLSNGGAVQTQESGIKESVSWGTQRTQDVLCEARAPLERGHSAEIPVGQPGTLAVDVQMQNMTLSGPDAEPQPGLESQGRAASMPRLAAETQPAPDASPMKRSISTLAPRPHTARLGSTALDRPAPSQAPHHHHHRCHRRRDRKQRSLEKGPSLSADTDGAPDSTVGPGLPTGEGPPGCRRERERRQERGRSQERRQPSSSSSEKHRFYSCDRFGGREPPQPKPSLSSHPTSPTAGQEPGPHPQGSGSVHGSPLLSTSGASTPGRGRRQLPQTPLTPRPSVTYKTANSSPVHFAGAPSGLPAFSPGRLSRGLSEHNALLQRDPLSRPLAPGSRIGSDPYLGQRLDSEAPARALPEDAPAFEETAASNSGRSSRTSYVSSLTSQPPPLRRVPNGYHCTLGLGGGGRARRGCHHPDRDRRC.

Topologically, residues 1-90 are cytoplasmic; the sequence is MVRFGDELGG…DNVVRKYAKR (90 aa). The span at 15 to 34 shows a compositional bias: gly residues; it reads AGGAERARGGGAGGAGGPGP. The disordered stretch occupies residues 15 to 37; sequence AGGAERARGGGAGGAGGPGPGGL. R22 bears the Omega-N-methylarginine mark. An I repeat occupies 82-359; sequence NVVRKYAKRI…LVLGVLSGEF (278 aa). Residues 91-114 traverse the membrane as a helical segment; that stretch reads ITEWPPFEYMILATIIANCIVLAL. Topologically, residues 115 to 131 are extracellular; it reads EQHLPDGDKTPMSERLD. A helical transmembrane segment spans residues 132–152; it reads DTEPYFIGIFCFEAGIKILAL. Residues 153–163 lie on the Cytoplasmic side of the membrane; that stretch reads GFVLHKGSYLR. A helical membrane pass occupies residues 164–182; sequence NGWNVMDFVVVLTGILATA. The Extracellular portion of the chain corresponds to 183 to 187; the sequence is GTDFD. Residues 188 to 211 form a helical membrane-spanning segment; the sequence is LRTLRAVRVLRPLKLVSGIPSLQV. At 212–221 the chain is on the cytoplasmic side; it reads VLKSIMKAMV. A helical transmembrane segment spans residues 222–244; the sequence is PLLQIGLLLFFAILMFAIIGLEF. Over 245–331 the chain is Extracellular; that stretch reads YMGKFHKACF…NTNDAAGNTW (87 aa). The N-linked (GlcNAc...) asparagine glycan is linked to N256. The helical transmembrane segment at 332–356 threads the bilayer; sequence NWLYFIPLIIIGSFFMLNLVLGVLS. Topologically, residues 357–483 are cytoplasmic; that stretch reads GEFAKERERV…FFIRRMVKAQ (127 aa). The interval 379–396 is binding to the beta subunit; that stretch reads QQIERELNGYLEWIFKAE. At S411 the chain carries Phosphoserine. Position 452 to 459 (452 to 459) interacts with ATP; sequence ASLKSGKT. One copy of the II repeat lies at 469-713; it reads EKMFRFFIRR…VFLAIAVDNL (245 aa). The chain crosses the membrane as a helical span at residues 484 to 502; that stretch reads SFYWTVLCVVALNTLCVAM. Residues 503–512 lie on the Extracellular side of the membrane; it reads VHYNQPQRLT. The chain crosses the membrane as a helical span at residues 513 to 535; the sequence is TALYFAEFVFLGLFLTEMSLKMY. Topologically, residues 536–545 are cytoplasmic; it reads GLGPRSYFRS. S545 is an a 1,2-diacyl-sn-glycero-3-phospho-(1D-myo-inositol-4,5-bisphosphate) binding site. A helical membrane pass occupies residues 546–567; it reads SFNCFDFGVIVGSIFEVVWAAV. At 568 to 574 the chain is on the extracellular side; that stretch reads KPGTSFG. Residues 575-587 form a helical membrane-spanning segment; the sequence is ISVLRALRLLRIF. Residues R585 and K588 each coordinate a 1,2-diacyl-sn-glycero-3-phospho-(1D-myo-inositol-4,5-bisphosphate). At 588 to 605 the chain is on the cytoplasmic side; the sequence is KVTKYWNSLRNLVVSLLN. A helical membrane pass occupies residues 606 to 631; it reads SMKSIISLLFLLFLFIVVFALLGMQL. The Extracellular portion of the chain corresponds to 632 to 683; that stretch reads FGGQFNFKDETPTTNFDTFPAAILTVFQILTGEDWNAVMYHGIESQGGVSRG. Residues 684–710 traverse the membrane as a helical segment; sequence MFSSFYFIVLTLFGNYTLLNVFLAIAV. The Cytoplasmic segment spans residues 711–1156; it reads DNLANAQELT…CCHYIVTMRY (446 aa). 3 positions are modified to phosphoserine: S746, S749, and S784. 5 stretches are compositionally biased toward basic and acidic residues: residues 809-827, 870-891, 927-937, 973-984, and 999-1026; these read DVKTHLDRPLVVEPGRDAP, EQDRAEALRAEGGELGPREERG, GSPEEAAEREP, CPREAESSEEPA, and TAEKDKEAAEKGGEATEAEKDKEARNHQ. Disordered regions lie at residues 809–1026 and 1056–1084; these read DVKT…RNHQ and VEEQPEDADNQRNVTRMGSQPPDTSTTVH. Residues 1066 to 1083 show a composition bias toward polar residues; the sequence is QRNVTRMGSQPPDTSTTV. At S1074 the chain carries Phosphoserine. The III repeat unit spans residues 1142-1424; the sequence is NLLRRCCHYI…IFVALIIITF (283 aa). Residues 1157-1175 form a helical membrane-spanning segment; the sequence is FEMVILVVIALSSIALAAE. At 1176-1183 the chain is on the extracellular side; sequence DPVRTDSP. Residues 1184–1208 form a helical membrane-spanning segment; it reads RNNALKYMDYIFTGVFTFEMVIKMI. Topologically, residues 1209–1222 are cytoplasmic; the sequence is DLGLLLHPGAYFRD. A helical membrane pass occupies residues 1223 to 1243; it reads LWNILDFIVVSGALVAFAFSG. Residues 1244 to 1249 lie on the Extracellular side of the membrane; sequence SKGKDI. The chain crosses the membrane as a helical span at residues 1250–1270; that stretch reads STIKSLRVLRVLRPLKTIKRL. Residues 1271–1288 lie on the Cytoplasmic side of the membrane; that stretch reads PKLKAVFDCVVNSLKNVL. Residues 1289 to 1308 traverse the membrane as a helical segment; the sequence is NILIVYMLFMFIFAVIAVQL. Residues 1309–1395 lie on the Extracellular side of the membrane; the sequence is FKGKFFYCTD…EQGPSPGYRM (87 aa). A helical membrane pass occupies residues 1396–1421; it reads ELSIFYVVYFVVFPFFFVNIFVALII. Over 1422–1476 the chain is Cytoplasmic; it reads ITFQEQGDKVMSECSLEKNERACIDFAISARPLTRYMPQNKQSFQYKTWTFVVSP. Residues 1461 to 1714 form an IV repeat; it reads NKQSFQYKTW…LFVAVIMDNF (254 aa). A helical membrane pass occupies residues 1477-1495; sequence PFEYFIMAMIALNTVVLMM. Residues 1496–1503 lie on the Extracellular side of the membrane; it reads KFYDAPYE. Residues 1504–1528 form a helical membrane-spanning segment; the sequence is YELMLKCLNIVFTSMFSMECVLKII. Residues 1529 to 1538 are Cytoplasmic-facing; it reads AFGVLNYFRD. The helical transmembrane segment at 1539–1560 threads the bilayer; the sequence is AWNVFDFVTVLGSITDILVTEI. The Extracellular portion of the chain corresponds to 1561–1566; it reads ANNFIN. A glycan (N-linked (GlcNAc...) asparagine) is linked at N1566. The helical transmembrane segment at 1567–1585 threads the bilayer; sequence LSFLRLFRAARLIKLLRQG. Topologically, residues 1586 to 1604 are cytoplasmic; it reads YTIRILLWTFVQSFKALPY. The helical transmembrane segment at 1605-1624 threads the bilayer; sequence VCLLIAMLFFIYAIIGMQVF. The Extracellular portion of the chain corresponds to 1625–1686; sequence GNIALDDDTS…SNASECGSDF (62 aa). An N-linked (GlcNAc...) asparagine glycan is attached at N1678. The chain crosses the membrane as a helical span at residues 1687–1710; it reads AYFYFVSFIFLCSFLMLNLFVAVI. Over 1711–2339 the chain is Cytoplasmic; the sequence is MDNFEYLTRD…CHHPDRDRRC (629 aa). The 36-residue stretch at 1727–1762 folds into the EF-hand domain; it reads HHLDEFIRVWAEYDPAACGRISYSDMFEMLKHMSPP. Residues D1740, R1746, and D1751 each contribute to the Ca(2+) site. Positions 1983-2312 are disordered; it reads TLSGPDAEPQ…QPPPLRRVPN (330 aa). The segment covering 2050–2064 has biased composition (basic residues); it reads PHHHHHRCHRRRDRK. At S2067 the chain carries Phosphoserine. Over residues 2099–2136 the composition is skewed to basic and acidic residues; the sequence is CRRERERRQERGRSQERRQPSSSSSEKHRFYSCDRFGG. Composition is skewed to polar residues over residues 2144–2155 and 2165–2181; these read PSLSSHPTSPTA and GSGSVHGSPLLSTSGAS. Phosphoserine occurs at positions 2224, 2233, and 2256. Low complexity predominate over residues 2286–2302; sequence SNSGRSSRTSYVSSLTS.

Belongs to the calcium channel alpha-1 subunit (TC 1.A.1.11) family. CACNA1B subfamily. Multisubunit complex consisting of alpha-1, alpha-2, beta and delta subunits in a 1:1:1:1 ratio. The channel activity is directed by the pore-forming and voltage-sensitive alpha-1 subunit. In many cases, this subunit is sufficient to generate voltage-sensitive calcium channel activity. The auxiliary subunits beta and alpha-2/delta linked by a disulfide bridge regulate the channel activity. Interacts with RIMS1. Interacts with FMR1 (via C-terminus); this interaction induces a decrease in the number of presynaptic functional CACNA1B channels at the cell surface. Post-translationally, phosphorylated in vitro by CaM-kinase II, PKA, PKC and CGPK. Widespread expression throughout the brain. Highest levels in corpus striatum and midbrain.

The protein localises to the membrane. The enzyme catalyses Ca(2+)(in) = Ca(2+)(out). Its activity is regulated as follows. Is specifically blocked by omega-conotoxin GVIA. Is specifically blocked by omega-conotoxin MVIIA (ziconotide). Is insensitive to dihydropyridines (DHP). In terms of biological role, voltage-sensitive calcium channels (VSCC) mediate the entry of calcium ions into excitable cells and are also involved in a variety of calcium-dependent processes, including muscle contraction, hormone or neurotransmitter release, gene expression, cell motility, cell division and cell death. This alpha-1B subunit gives rise to N-type calcium currents. N-type calcium channels belong to the 'high-voltage activated' (HVA) group. They are involved in pain signaling. Calcium channels containing alpha-1B subunit may play a role in directed migration of immature neurons. Mediates Ca(2+) release probability at hippocampal neuronal soma and synaptic terminals. This chain is Voltage-dependent N-type calcium channel subunit alpha-1B (CACNA1B), found in Oryctolagus cuniculus (Rabbit).